A 154-amino-acid chain; its full sequence is Ribosomal RNA large subunit methyltransferase H (154 aa).

S-adenosyl-L-methionine is bound by residues leucine 70, glycine 102, and leucine 121 to leucine 126.

This sequence belongs to the RNA methyltransferase RlmH family. Homodimer.

It is found in the cytoplasm. It catalyses the reaction pseudouridine(1915) in 23S rRNA + S-adenosyl-L-methionine = N(3)-methylpseudouridine(1915) in 23S rRNA + S-adenosyl-L-homocysteine + H(+). Specifically methylates the pseudouridine at position 1915 (m3Psi1915) in 23S rRNA. This chain is Ribosomal RNA large subunit methyltransferase H, found in Citrifermentans bemidjiense (strain ATCC BAA-1014 / DSM 16622 / JCM 12645 / Bem) (Geobacter bemidjiensis).